The following is a 270-amino-acid chain: Cbp/p300-interacting transactivator 2 (270 aa).

Residues 138-201 form a disordered region; that stretch reads LHPAAGHQMN…SGGGSGSGNM (64 aa). The segment covering 165–198 has biased composition (gly residues); the sequence is STPGGSGGSSTPGGSGSSSGGGAGSSNSGGGSGS.

It belongs to the CITED family. In terms of assembly, interacts (via C-terminus) with SMAD2. Interacts (via C-terminus) with SMAD3 (via MH2 domain). Interacts with LHX2 (via LIM domains). Interacts with WT1. Interacts (via C-terminus) with EP300 (via CH1 domain); the interaction is stimulated in response to hypoxia. Interacts with PPARA. Interacts (via C-terminus) with TFAP2A, TFAP2B and TFAP2C.

The protein localises to the nucleus. Its function is as follows. Transcriptional coactivator of the p300/CBP-mediated transcription complex. Acts as a bridge, linking TFAP2 transcription factors and the p300/CBP transcriptional coactivator complex in order to stimulate TFAP2-mediated transcriptional activation. Positively regulates TGF-beta signaling through its association with the SMAD/p300/CBP-mediated transcriptional coactivator complex. Stimulates the peroxisome proliferator-activated receptors PPARA transcriptional activity. Enhances estrogen-dependent transactivation mediated by estrogen receptors. Also acts as a transcriptional corepressor; interferes with the binding of the transcription factors HIF1A or STAT2 and the p300/CBP transcriptional coactivator complex. Participates in sex determination and early gonad development by stimulating transcription activation of SRY. Plays a role in controlling left-right patterning during embryogenesis; potentiates transcriptional activation of NODAL-mediated gene transcription in the left lateral plate mesoderm (LPM). Plays an essential role in differentiation of the adrenal cortex from the adrenogonadal primordium (AGP); stimulates WT1-mediated transcription activation thereby up-regulating the nuclear hormone receptor NR5A1 promoter activity. Associates with chromatin to the PITX2 P1 promoter region. The polypeptide is Cbp/p300-interacting transactivator 2 (CITED2) (Homo sapiens (Human)).